We begin with the raw amino-acid sequence, 272 residues long: Phosphoglycolate phosphatase (272 aa).

D19 functions as the Nucleophile in the catalytic mechanism. 3 residues coordinate Mg(2+): D19, D21, and D182.

Belongs to the HAD-like hydrolase superfamily. CbbY/CbbZ/Gph/YieH family. The cofactor is Mg(2+).

It carries out the reaction 2-phosphoglycolate + H2O = glycolate + phosphate. It participates in organic acid metabolism; glycolate biosynthesis; glycolate from 2-phosphoglycolate: step 1/1. In terms of biological role, specifically catalyzes the dephosphorylation of 2-phosphoglycolate. Is involved in the dissimilation of the intracellular 2-phosphoglycolate formed during the DNA repair of 3'-phosphoglycolate ends, a major class of DNA lesions induced by oxidative stress. In Pseudomonas savastanoi pv. phaseolicola (strain 1448A / Race 6) (Pseudomonas syringae pv. phaseolicola (strain 1448A / Race 6)), this protein is Phosphoglycolate phosphatase.